The following is a 963-amino-acid chain: Putative RNA Helicase B962L (963 aa).

The Helicase ATP-binding domain occupies 43–229 (IPTSLADRVL…FGIGKENIIL (187 aa)). An ATP-binding site is contributed by 56 to 63 (SRTGSGKS). The DEAH box signature appears at 167-170 (DEAH). The Helicase C-terminal domain maps to 253–459 (ACETALTIHK…TIKKNKEGVF (207 aa)). The helical transmembrane segment at 521-541 (GYFWQAAISDIAIILAVVSVV) threads the bilayer.

This sequence belongs to the DEAD box helicase family. DEAH subfamily.

The protein localises to the host membrane. It localises to the virion. The catalysed reaction is ATP + H2O = ADP + phosphate + H(+). This African swine fever virus (isolate Tick/Malawi/Lil 20-1/1983) (ASFV) protein is Putative RNA Helicase B962L.